The sequence spans 101 residues: A-type ATP synthase subunit K (101 aa).

Transmembrane regions (helical) follow at residues 4-24 (ALLI…AAQA), 32-52 (FMGI…GAGV), and 75-95 (VLIF…FAVL).

It belongs to the V-ATPase proteolipid subunit family. In terms of assembly, has multiple subunits with at least A(3), B(3), C, D, E, F, H, I and proteolipid K(x).

It localises to the cell membrane. In terms of biological role, component of the A-type ATP synthase that produces ATP from ADP in the presence of a proton gradient across the membrane. The polypeptide is A-type ATP synthase subunit K (Sulfolobus acidocaldarius (strain ATCC 33909 / DSM 639 / JCM 8929 / NBRC 15157 / NCIMB 11770)).